We begin with the raw amino-acid sequence, 387 residues long: Queuine tRNA-ribosyltransferase (387 aa).

Catalysis depends on D105, which acts as the Proton acceptor. Substrate is bound by residues 105 to 109 (DSGGF), D177, and G248. Residues 278-284 (GIGDLPS) are RNA binding. The active-site Nucleophile is the D297. The tract at residues 302–306 (TRAAR) is RNA binding; important for wobble base 34 recognition. Positions 335, 337, 340, and 366 each coordinate Zn(2+).

Belongs to the queuine tRNA-ribosyltransferase family. Homodimer. Within each dimer, one monomer is responsible for RNA recognition and catalysis, while the other monomer binds to the replacement base PreQ1. Requires Zn(2+) as cofactor.

The enzyme catalyses 7-aminomethyl-7-carbaguanine + guanosine(34) in tRNA = 7-aminomethyl-7-carbaguanosine(34) in tRNA + guanine. Its pathway is tRNA modification; tRNA-queuosine biosynthesis. Catalyzes the base-exchange of a guanine (G) residue with the queuine precursor 7-aminomethyl-7-deazaguanine (PreQ1) at position 34 (anticodon wobble position) in tRNAs with GU(N) anticodons (tRNA-Asp, -Asn, -His and -Tyr). Catalysis occurs through a double-displacement mechanism. The nucleophile active site attacks the C1' of nucleotide 34 to detach the guanine base from the RNA, forming a covalent enzyme-RNA intermediate. The proton acceptor active site deprotonates the incoming PreQ1, allowing a nucleophilic attack on the C1' of the ribose to form the product. After dissociation, two additional enzymatic reactions on the tRNA convert PreQ1 to queuine (Q), resulting in the hypermodified nucleoside queuosine (7-(((4,5-cis-dihydroxy-2-cyclopenten-1-yl)amino)methyl)-7-deazaguanosine). The chain is Queuine tRNA-ribosyltransferase from Protochlamydia amoebophila (strain UWE25).